The following is a 425-amino-acid chain: Gamma-glutamyl phosphate reductase (425 aa).

It belongs to the gamma-glutamyl phosphate reductase family.

It is found in the cytoplasm. The enzyme catalyses L-glutamate 5-semialdehyde + phosphate + NADP(+) = L-glutamyl 5-phosphate + NADPH + H(+). Its pathway is amino-acid biosynthesis; L-proline biosynthesis; L-glutamate 5-semialdehyde from L-glutamate: step 2/2. Functionally, catalyzes the NADPH-dependent reduction of L-glutamate 5-phosphate into L-glutamate 5-semialdehyde and phosphate. The product spontaneously undergoes cyclization to form 1-pyrroline-5-carboxylate. The protein is Gamma-glutamyl phosphate reductase of Opitutus terrae (strain DSM 11246 / JCM 15787 / PB90-1).